Here is a 318-residue protein sequence, read N- to C-terminus: Aspartate carbamoyltransferase catalytic subunit (318 aa).

Residues arginine 54 and threonine 55 each contribute to the carbamoyl phosphate site. Lysine 82 contacts L-aspartate. The carbamoyl phosphate site is built by arginine 104, histidine 134, and glutamine 137. L-aspartate is bound by residues arginine 174 and arginine 230. Carbamoyl phosphate contacts are provided by glycine 271 and proline 272.

Belongs to the aspartate/ornithine carbamoyltransferase superfamily. ATCase family. In terms of assembly, heterododecamer (2C3:3R2) of six catalytic PyrB chains organized as two trimers (C3), and six regulatory PyrI chains organized as three dimers (R2).

It catalyses the reaction carbamoyl phosphate + L-aspartate = N-carbamoyl-L-aspartate + phosphate + H(+). It participates in pyrimidine metabolism; UMP biosynthesis via de novo pathway; (S)-dihydroorotate from bicarbonate: step 2/3. In terms of biological role, catalyzes the condensation of carbamoyl phosphate and aspartate to form carbamoyl aspartate and inorganic phosphate, the committed step in the de novo pyrimidine nucleotide biosynthesis pathway. This chain is Aspartate carbamoyltransferase catalytic subunit, found in Clavibacter sepedonicus (Clavibacter michiganensis subsp. sepedonicus).